A 213-amino-acid polypeptide reads, in one-letter code: Orotate phosphoribosyltransferase (213 aa).

Lys26 contributes to the 5-phospho-alpha-D-ribose 1-diphosphate binding site. 34 to 35 contributes to the orotate binding site; it reads FF. Residues 72-73, Arg99, Lys100, Lys103, His105, and 124-132 contribute to the 5-phospho-alpha-D-ribose 1-diphosphate site; these read YK and DDVITAGTA. Positions 128 and 156 each coordinate orotate.

Belongs to the purine/pyrimidine phosphoribosyltransferase family. PyrE subfamily. As to quaternary structure, homodimer. The cofactor is Mg(2+).

It catalyses the reaction orotidine 5'-phosphate + diphosphate = orotate + 5-phospho-alpha-D-ribose 1-diphosphate. The protein operates within pyrimidine metabolism; UMP biosynthesis via de novo pathway; UMP from orotate: step 1/2. In terms of biological role, catalyzes the transfer of a ribosyl phosphate group from 5-phosphoribose 1-diphosphate to orotate, leading to the formation of orotidine monophosphate (OMP). The sequence is that of Orotate phosphoribosyltransferase from Pseudomonas syringae pv. tomato (strain ATCC BAA-871 / DC3000).